A 624-amino-acid polypeptide reads, in one-letter code: Atypical kinase COQ8B, mitochondrial (624 aa).

A disordered region spans residues 90–117 (EMPPDFSSKDGRGETSETPVGAATGTIK). The helical transmembrane segment at 189-205 (LANFGGLAVGLGIGAIA) threads the bilayer. The short motif at 249-252 (KIGQ) is the KxGQ motif element. One can recognise a Protein kinase domain in the interval 285–517 (MHKVLEEELG…ATVLKKSKDL (233 aa)). Positions 310–313 (AAAS) match the AAAS motif motif. Residues Ser313, Lys331, and 418 to 421 (MELV) each bind ATP. The active-site Proton acceptor is Asp461. Positions 466 and 480 each coordinate ATP.

This sequence belongs to the protein kinase superfamily. ADCK protein kinase family. Homodimer; homodimerizes via its transmembrane region. Interacts with the multi-subunit COQ enzyme complex.

It is found in the mitochondrion membrane. Its subcellular location is the cytoplasm. The protein localises to the cytosol. It localises to the cell membrane. It functions in the pathway cofactor biosynthesis; ubiquinone biosynthesis. Functionally, atypical kinase involved in the biosynthesis of coenzyme Q, also named ubiquinone, an essential lipid-soluble electron transporter for aerobic cellular respiration. Its substrate specificity is still unclear: may act as a protein kinase that mediates phosphorylation of COQ3. According to other reports, acts as a small molecule kinase, possibly a lipid kinase that phosphorylates a prenyl lipid in the ubiquinone biosynthesis pathway, as suggested by its ability to bind coenzyme Q lipid intermediates. However, the small molecule kinase activity was not confirmed by another publication. Required for podocyte migration. The sequence is that of Atypical kinase COQ8B, mitochondrial from Danio rerio (Zebrafish).